The primary structure comprises 1144 residues: MGMLNCLHGNNMSGQHDIPPEVGDQPEQEPLEAQGAAAPGAGVGPAEEMETEPSNNEPIPDETDSEVCGPPEDSKSDIQSPSQAFEEVQVGGDYSPPPEEAMPFEIQQPSLGDFWPTLEQPGPSGTPSGIKAFNPAILEPGTPTGAHPGLGAYSPPPEEAMPFEFNEPAQEDRCQPPLQVPDLAPGGPEAWVSRALPAEPGNLGFENTGFREDYSPPPEESVPFQLDGEEFGGDSPPPGLPRVTPQIGIGGEFPTVAVPSTLCLAPAANAPPLWVQGAIGRPFREAVRSPNFAYDISPMEITRPLLEIGRASTGVDDDTAVNMDSPPIASDGPPIEVSGAPVKSEHAKRPPLERQAAETGNSPISSTTAEEAKVPSLERGEGSPTQPETVHIKPAPVAESGTDSSKADPDSATHAVLQIGPEEVGGVPTMPTDLPPASEDAGPDVRAEPDGGTAPATPAESEDNREPAAAAAAEPAAEPAAEPAAEPAAEPAAEPAAEAVPDTEAESASGAVPDTQEEPAAAAASATPAEPAARAAPVTPTEPATRAVPSARAHPAAGAVPGASAMSAAARAAAARAAYAGPLVWGARSLSATPAARASLPARAAAAARAASAARAVAAGRSASAAPSRAHLRPPSPEIQVADPPTPRPAPRPSAWPDKYERGRSCCRYEAASGICEIESSSDESEEGATGCFQWLLRRNRRPGQPRSHTVGSNPVRNFFARAFGSCFGLSECTRSRSLSPGKAKDPMEERRKQMRKEAMEMREQKRADKKRSKLIDKQLEEEKMDYMCTHRLLLLGAGESGKSTIVKQMRILHVNGFNGEGGEEDPQAARSNSDGEKATKVQDIKNNLKEAIETIVAAMSNLVPPVELANPENQFRVDYILSVMNVPNFDFPPEFYEHAKALWEDEGVRACYERSNEYQLIDCAQYFLDKIDVIKQADYVPSDQDLPRCRVLTSGIFETKFQVDKVNFHMFDVGGQRDERRKWIQCFNDVTAIIFVVASSSYNMVIREDNQTNRLQEALNLFKSIWNNRWLRTISVILFLNKQDLLAEKVLAGKSKIEDYFPEFARYTTPEDATPEPGEDPRVTRAKYFIRDEFLRISTASGDGRHYCYPHFTCAVDTENIRRVFNDCRDIIQRMHLRQYELL.

Disordered stretches follow at residues 1–186 (MGML…LAPG), 316–558 (DDDT…PAAG), 622–657 (SASA…SAWP), and 735–772 (RSRS…DKKR). Low complexity predominate over residues 31–46 (LEAQGAAAPGAGVGPA). Over residues 343–356 (KSEHAKRPPLERQA) the composition is skewed to basic and acidic residues. Polar residues predominate over residues 358–369 (ETGNSPISSTTA). Basic and acidic residues predominate over residues 370-381 (EEAKVPSLERGE). Composition is skewed to low complexity over residues 467–499 (PAAA…AAEA) and 518–558 (EPAA…PAAG). A compositionally biased stretch (pro residues) spans 644 to 654 (PPTPRPAPRPS). Basic and acidic residues predominate over residues 743–767 (KAKDPMEERRKQMRKEAMEMREQKR). The stretch at 745–772 (KDPMEERRKQMRKEAMEMREQKRADKKR) forms a coiled coil. Residues 789-1144 (CTHRLLLLGA…RMHLRQYELL (356 aa)) form the G-alpha domain. The segment at 792-805 (RLLLLGAGESGKST) is G1 motif. 797-805 (GAGESGKST) serves as a coordination point for GTP. S804 serves as a coordination point for Mg(2+). The interval 818-840 (FNGEGGEEDPQAARSNSDGEKAT) is disordered. The stretch at 837-863 (EKATKVQDIKNNLKEAIETIVAAMSNL) forms a coiled coil. The interval 946–954 (DLPRCRVLT) is G2 motif. GTP contacts are provided by residues 947-954 (LPRCRVLT), 973-977 (DVGGQ), and 1042-1045 (NKQD). Residue R951 is modified to ADP-ribosylarginine; by cholera toxin. T954 contributes to the Mg(2+) binding site. The segment at 969 to 978 (FHMFDVGGQR) is G3 motif. The G4 motif stretch occupies residues 1038-1045 (ILFLNKQD). Position 1102 is a phosphoserine (S1102). A G5 motif region spans residues 1114-1119 (TCAVDT). Position 1116 (A1116) interacts with GTP.

It belongs to the G-alpha family. G(s) subfamily. G proteins are composed of 3 units; alpha, beta and gamma. The alpha chain contains the guanine nucleotide binding site. Interacts through its N-terminal region with ALEX which is produced from the same locus in a different open reading frame. This interaction may inhibit its adenylyl cyclase-stimulating activity. Interacts with MAGED2. As to expression, enriched in neuroendocrine tissues with a particularly high level of expression in pituitary where it is abundant in intermediate and anterior lobes. In adrenal gland, found in central region containing medullary chromaffin cells but not in cortex. In cerebellum, strongly expressed in perikarya of Purkinje cells. Not detected in liver, kidney or neurohypophysis.

The protein resides in the cell membrane. It is found in the apical cell membrane. Guanine nucleotide-binding proteins (G proteins) function as transducers in numerous signaling pathways controlled by G protein-coupled receptors (GPCRs). Signaling involves the activation of adenylyl cyclases, resulting in increased levels of the signaling molecule cAMP. GNAS functions downstream of several GPCRs, including beta-adrenergic receptors. XLas isoforms interact with the same set of receptors as Gnas isoforms. The protein is Guanine nucleotide-binding protein G(s) subunit alpha isoforms XLas of Rattus norvegicus (Rat).